A 442-amino-acid polypeptide reads, in one-letter code: C4-dicarboxylate transport protein 2 (442 aa).

A run of 9 helical transmembrane segments spans residues 20–39, 52–74, 89–111, 141–158, 162–179, 200–221, 231–253, 342–364, and 368–387; these read QLYV…GHYY, AFIK…TGIA, AMLY…ANVV, VTGF…GAFA, ILQV…LALV, LVSV…FTIG, LAML…LGAV, ILLL…AGFI, and ATLS…ILGV.

It belongs to the dicarboxylate/amino acid:cation symporter (DAACS) (TC 2.A.23) family.

It localises to the cell inner membrane. Its function is as follows. Responsible for the transport of dicarboxylates such as succinate, fumarate, and malate from the periplasm across the membrane. This transport system plays an important role in the energy supply of rhizobium-legume symbionts. The protein is C4-dicarboxylate transport protein 2 (dctA2) of Mesorhizobium japonicum (strain LMG 29417 / CECT 9101 / MAFF 303099) (Mesorhizobium loti (strain MAFF 303099)).